The sequence spans 474 residues: F420-non-reducing hydrogenase vhc subunit A (474 aa).

Residues Cys-61, Cys-64, Cys-445, and Cys-448 each coordinate Ni(2+).

The protein belongs to the [NiFe]/[NiFeSe] hydrogenase large subunit family. The F420-non-reducing hydrogenase vhc is composed of three subunits; VhcA, VhcD and VhcG. Ni(2+) is required as a cofactor.

In Methanococcus voltae, this protein is F420-non-reducing hydrogenase vhc subunit A (vhcA).